The following is a 264-amino-acid chain: UPF0162 protein PM0557 (264 aa).

The protein belongs to the UPF0162 family.

This chain is UPF0162 protein PM0557, found in Pasteurella multocida (strain Pm70).